The sequence spans 292 residues: Ribosomal protein L11 methyltransferase (292 aa).

Thr144, Gly165, Asp187, and Asn229 together coordinate S-adenosyl-L-methionine.

Belongs to the methyltransferase superfamily. PrmA family.

The protein resides in the cytoplasm. The catalysed reaction is L-lysyl-[protein] + 3 S-adenosyl-L-methionine = N(6),N(6),N(6)-trimethyl-L-lysyl-[protein] + 3 S-adenosyl-L-homocysteine + 3 H(+). In terms of biological role, methylates ribosomal protein L11. The protein is Ribosomal protein L11 methyltransferase of Pseudomonas fluorescens (strain Pf0-1).